Here is a 358-residue protein sequence, read N- to C-terminus: Feruloyl CoA ortho-hydroxylase F6H1-1 (358 aa).

The region spanning 200-308 (TKESLLMGSK…RISVPIFVNP (109 aa)) is the Fe2OG dioxygenase domain. Tyrosine 216 lines the 2-oxoglutarate pocket. Fe cation-binding residues include histidine 231, aspartate 233, and histidine 289. Residues arginine 299 and serine 301 each coordinate 2-oxoglutarate.

Belongs to the iron/ascorbate-dependent oxidoreductase family. L-ascorbate is required as a cofactor. Requires Fe(2+) as cofactor.

The enzyme catalyses (E)-feruloyl-CoA + 2-oxoglutarate + O2 = (E)-6-hydroxyferuloyl-CoA + succinate + CO2. It participates in phenylpropanoid metabolism. 2-oxoglutarate (OG)- and Fe(II)-dependent dioxygenase (2OGD) involved in scopoletin biosynthesis. Converts feruloyl CoA into 6'-hydroxyferuloyl CoA. The polypeptide is Feruloyl CoA ortho-hydroxylase F6H1-1 (Ipomoea batatas (Sweet potato)).